The sequence spans 248 residues: MSSQDFDVEFVDRDDREARFVVRNITPAFANGIRRAILVDVPTLSIDTVRFVENSSVMFDEQLGLRLGLVPLTTPEDYAAGEAVTLALDVEGPGTAYSGDLVSNDPEVEAADENIPIIELKDDQRLELEADAVMGHGRDHAKHQGGVAVGYRHLQRVHVVGDSPEYADDDPQMLRGVIEEDDELVPTDDFDNDLTTRYPGKEVEIEDVDGAFVFHVESDGSMPVEELVLRAVDTLVDRADELEQAVQL.

This sequence belongs to the archaeal Rpo3/eukaryotic RPB3 RNA polymerase subunit family. Part of the RNA polymerase complex.

The protein localises to the cytoplasm. The enzyme catalyses RNA(n) + a ribonucleoside 5'-triphosphate = RNA(n+1) + diphosphate. DNA-dependent RNA polymerase (RNAP) catalyzes the transcription of DNA into RNA using the four ribonucleoside triphosphates as substrates. The chain is DNA-directed RNA polymerase subunit Rpo3 from Halobacterium salinarum (strain ATCC 29341 / DSM 671 / R1).